The chain runs to 393 residues: Acyl-homoserine-lactone synthase OpaM (393 aa).

Belongs to the LuxM / VanM family.

The enzyme catalyses a fatty acyl-[ACP] + S-adenosyl-L-methionine = an N-acyl-L-homoserine lactone + S-methyl-5'-thioadenosine + holo-[ACP] + H(+). This Vibrio parahaemolyticus serotype O3:K6 (strain RIMD 2210633) protein is Acyl-homoserine-lactone synthase OpaM (opaM).